A 247-amino-acid chain; its full sequence is Phosphate import ATP-binding protein PstB (247 aa).

The 241-residue stretch at 2 to 242 folds into the ABC transporter domain; the sequence is CRDVNVYYGE…PRHPLTEDYI (241 aa). 32–39 contributes to the ATP binding site; it reads GPSGCGKS.

It belongs to the ABC transporter superfamily. Phosphate importer (TC 3.A.1.7) family. As to quaternary structure, the complex is composed of two ATP-binding proteins (PstB), two transmembrane proteins (PstC and PstA) and a solute-binding protein (PstS).

Its subcellular location is the cell inner membrane. The enzyme catalyses phosphate(out) + ATP + H2O = ADP + 2 phosphate(in) + H(+). Part of the ABC transporter complex PstSACB involved in phosphate import. Responsible for energy coupling to the transport system. This Methylococcus capsulatus (strain ATCC 33009 / NCIMB 11132 / Bath) protein is Phosphate import ATP-binding protein PstB.